The primary structure comprises 305 residues: Oxygen-dependent coproporphyrinogen-III oxidase (305 aa).

S93 is a substrate binding site. Residues H97 and H107 each contribute to the a divalent metal cation site. The active-site Proton donor is the H107. 109-111 (NVR) is a substrate binding site. H146 and H176 together coordinate a divalent metal cation. An important for dimerization region spans residues 241-276 (YVEFNLVFDRGTLFGLQSGGRTESILMSLPPQVRWG). A substrate-binding site is contributed by 259–261 (GGR).

It belongs to the aerobic coproporphyrinogen-III oxidase family. In terms of assembly, homodimer. The cofactor is a divalent metal cation.

It localises to the cytoplasm. The enzyme catalyses coproporphyrinogen III + O2 + 2 H(+) = protoporphyrinogen IX + 2 CO2 + 2 H2O. The protein operates within porphyrin-containing compound metabolism; protoporphyrin-IX biosynthesis; protoporphyrinogen-IX from coproporphyrinogen-III (O2 route): step 1/1. Involved in the heme biosynthesis. Catalyzes the aerobic oxidative decarboxylation of propionate groups of rings A and B of coproporphyrinogen-III to yield the vinyl groups in protoporphyrinogen-IX. This Pseudomonas aeruginosa (strain LESB58) protein is Oxygen-dependent coproporphyrinogen-III oxidase.